We begin with the raw amino-acid sequence, 1464 residues long: Sister chromatid cohesion protein PDS5 homolog B-B (1464 aa).

An HEAT repeat occupies 383–419; that stretch reads LLVNDQLLNFVRERTLDKRWRVRKEAMMGLAQIYKKY. The disordered stretch occupies residues 1126–1464; that stretch reads KSTNVLGAVN…MKSELEGPLL (339 aa). Over residues 1137 to 1155 the composition is skewed to polar residues; sequence PLSSAGKQMQSKSSRMETV. Low complexity predominate over residues 1156–1168; that stretch reads SNASSGSNPSSPG. Acidic residues predominate over residues 1177 to 1186; the sequence is TELDQIEYED. 3 stretches are compositionally biased toward basic and acidic residues: residues 1197 to 1215, 1234 to 1244, and 1265 to 1274; these read KKSDKRDDSDLLKSEVEKP, ELSKPAQEPKS, and WQEKRLKEDL. The segment covering 1286-1295 has biased composition (basic residues); that stretch reads KKGRRGRPPK. Residues 1287 to 1299 constitute a DNA-binding region (a.T hook 1); the sequence is KGRRGRPPKSAKM. The segment covering 1325 to 1342 has biased composition (acidic residues); sequence PTDEEDHLEISEEQDSEN. Over residues 1347–1357 the composition is skewed to basic residues; it reads RKGRGSSKKTP. Positions 1359 to 1373 are enriched in polar residues; it reads KSDSTDSALDTSRPT. 2 DNA-binding regions (a.T hook) span residues 1375 to 1387 and 1391 to 1403; these read QKRRGRPPKTPTV and KSHVGRPRKVVSK. Basic residues predominate over residues 1390 to 1400; the sequence is KKSHVGRPRKV. Residues 1425 to 1435 show a composition bias toward acidic residues; that stretch reads SNEEETADEEV. The span at 1441 to 1453 shows a compositional bias: basic residues; that stretch reads GRRRTAKKRRWIQ. Over residues 1455–1464 the composition is skewed to basic and acidic residues; it reads MKSELEGPLL.

It belongs to the PDS5 family. In terms of assembly, interacts with the cohesin complex. In terms of processing, phosphorylated in mitotic cells.

Its subcellular location is the nucleus. Functionally, plays a role in androgen-induced proliferative arrest. Required for maintenance of sister chromatid cohesion during mitosis. The polypeptide is Sister chromatid cohesion protein PDS5 homolog B-B (pds5b-b) (Xenopus laevis (African clawed frog)).